Here is a 345-residue protein sequence, read N- to C-terminus: RDS/peripherin-like protein xRDS35 (345 aa).

At 1–24 (MVLFKAKFSFQRRVKLAQTLWLLS) the chain is on the cytoplasmic side. A helical membrane pass occupies residues 25 to 43 (WLSVLVGCLTFGMGIFLKV). The Lumenal segment spans residues 44–61 (QLWIHNEVMENTSAHAVP). A glycan (N-linked (GlcNAc...) asparagine) is linked at Asn-54. Residues 62–80 (NTVITAGLVGILLGIYAGK) traverse the membrane as a helical segment. At 81 to 99 (VSQASMDVTKYQRWKSFMM) the chain is on the cytoplasmic side. The helical transmembrane segment at 100–123 (PFFFLAILSCLVCLAALVLSVALR) threads the bilayer. The Lumenal segment spans residues 124-264 (GTLEESLKIG…LSYYTGIMAT (141 aa)). Residue Asn-229 is glycosylated (N-linked (GlcNAc...) asparagine). A helical transmembrane segment spans residues 265–290 (NGAAVTLSFLLQASVLVSLRYLHTSM). Residues 291 to 345 (DKISGPDDMEADTEGFILEKGVTETMNTTLEKMKGLFMSNQVETAEGGGEAAAAS) are Cytoplasmic-facing.

Belongs to the PRPH2/ROM1 family. In terms of assembly, homodimer; disulfide-linked. As to expression, rod specific.

It localises to the membrane. This Xenopus laevis (African clawed frog) protein is RDS/peripherin-like protein xRDS35 (rds35).